Consider the following 435-residue polypeptide: uncharacterized protein (435 aa).

Residues Q261, Y294, E318, and D366 each coordinate S-adenosyl-L-methionine. Catalysis depends on C393, which acts as the Nucleophile.

Belongs to the class I-like SAM-binding methyltransferase superfamily. RNA M5U methyltransferase family.

This is an uncharacterized protein from Bifidobacterium longum (strain NCC 2705).